The primary structure comprises 454 residues: tRNA-2-methylthio-N(6)-dimethylallyladenosine synthase (454 aa).

Positions 6 to 122 (RRYHITTFGC…LKDLLESVFA (117 aa)) constitute an MTTase N-terminal domain. C15, C51, C85, C157, C161, and C164 together coordinate [4Fe-4S] cluster. The Radical SAM core domain maps to 143 to 380 (RDSTVTAWVN…NHLVNVKAAE (238 aa)). The TRAM domain occupies 383–447 (QRYMGRIEEV…AFSLTGEPIE (65 aa)).

The protein belongs to the methylthiotransferase family. MiaB subfamily. As to quaternary structure, monomer. It depends on [4Fe-4S] cluster as a cofactor.

Its subcellular location is the cytoplasm. The catalysed reaction is N(6)-dimethylallyladenosine(37) in tRNA + (sulfur carrier)-SH + AH2 + 2 S-adenosyl-L-methionine = 2-methylsulfanyl-N(6)-dimethylallyladenosine(37) in tRNA + (sulfur carrier)-H + 5'-deoxyadenosine + L-methionine + A + S-adenosyl-L-homocysteine + 2 H(+). Its function is as follows. Catalyzes the methylthiolation of N6-(dimethylallyl)adenosine (i(6)A), leading to the formation of 2-methylthio-N6-(dimethylallyl)adenosine (ms(2)i(6)A) at position 37 in tRNAs that read codons beginning with uridine. This is tRNA-2-methylthio-N(6)-dimethylallyladenosine synthase from Nostoc sp. (strain PCC 7120 / SAG 25.82 / UTEX 2576).